A 255-amino-acid chain; its full sequence is tRNA (guanine-N(1)-)-methyltransferase (255 aa).

Residues Gly-117 and Leu-137–Leu-142 each bind S-adenosyl-L-methionine.

It belongs to the RNA methyltransferase TrmD family. Homodimer.

Its subcellular location is the cytoplasm. The enzyme catalyses guanosine(37) in tRNA + S-adenosyl-L-methionine = N(1)-methylguanosine(37) in tRNA + S-adenosyl-L-homocysteine + H(+). In terms of biological role, specifically methylates guanosine-37 in various tRNAs. The polypeptide is tRNA (guanine-N(1)-)-methyltransferase (Paraburkholderia phytofirmans (strain DSM 17436 / LMG 22146 / PsJN) (Burkholderia phytofirmans)).